Here is a 455-residue protein sequence, read N- to C-terminus: Bifunctional protein GlmU (455 aa).

Residues 1-226 (MSLDIVILAA…AMEVQGANDR (226 aa)) form a pyrophosphorylase region. UDP-N-acetyl-alpha-D-glucosamine is bound by residues 8 to 11 (LAAG), lysine 22, glutamine 73, 78 to 79 (GT), 99 to 101 (YGD), glycine 136, glutamate 151, asparagine 166, and asparagine 224. Aspartate 101 is a Mg(2+) binding site. Asparagine 224 lines the Mg(2+) pocket. A linker region spans residues 227 to 247 (KQLSELERHYQLREARRLMAA). Residues 248–455 (GVTLRDPSRF…WKRPVKITKD (208 aa)) are N-acetyltransferase. Arginine 330 and lysine 348 together coordinate UDP-N-acetyl-alpha-D-glucosamine. Histidine 360 acts as the Proton acceptor in catalysis. Positions 363 and 374 each coordinate UDP-N-acetyl-alpha-D-glucosamine. Acetyl-CoA is bound by residues alanine 377, 383-384 (NY), serine 402, alanine 420, and arginine 437.

This sequence in the N-terminal section; belongs to the N-acetylglucosamine-1-phosphate uridyltransferase family. The protein in the C-terminal section; belongs to the transferase hexapeptide repeat family. Homotrimer. It depends on Mg(2+) as a cofactor.

The protein localises to the cytoplasm. The enzyme catalyses alpha-D-glucosamine 1-phosphate + acetyl-CoA = N-acetyl-alpha-D-glucosamine 1-phosphate + CoA + H(+). It catalyses the reaction N-acetyl-alpha-D-glucosamine 1-phosphate + UTP + H(+) = UDP-N-acetyl-alpha-D-glucosamine + diphosphate. Its pathway is nucleotide-sugar biosynthesis; UDP-N-acetyl-alpha-D-glucosamine biosynthesis; N-acetyl-alpha-D-glucosamine 1-phosphate from alpha-D-glucosamine 6-phosphate (route II): step 2/2. It functions in the pathway nucleotide-sugar biosynthesis; UDP-N-acetyl-alpha-D-glucosamine biosynthesis; UDP-N-acetyl-alpha-D-glucosamine from N-acetyl-alpha-D-glucosamine 1-phosphate: step 1/1. It participates in bacterial outer membrane biogenesis; LPS lipid A biosynthesis. In terms of biological role, catalyzes the last two sequential reactions in the de novo biosynthetic pathway for UDP-N-acetylglucosamine (UDP-GlcNAc). The C-terminal domain catalyzes the transfer of acetyl group from acetyl coenzyme A to glucosamine-1-phosphate (GlcN-1-P) to produce N-acetylglucosamine-1-phosphate (GlcNAc-1-P), which is converted into UDP-GlcNAc by the transfer of uridine 5-monophosphate (from uridine 5-triphosphate), a reaction catalyzed by the N-terminal domain. In Pseudomonas syringae pv. tomato (strain ATCC BAA-871 / DC3000), this protein is Bifunctional protein GlmU.